We begin with the raw amino-acid sequence, 162 residues long: Cytochrome c-type biogenesis protein CcmE (162 aa).

Topologically, residues 1 to 8 (MNPRRKKR) are cytoplasmic. Residues 9–29 (LTLAVALIGGVAAITSLLLYA) traverse the membrane as a helical; Signal-anchor for type II membrane protein segment. The Periplasmic segment spans residues 30–162 (LNSNLNLFYT…YSQQKAPDTK (133 aa)). Heme-binding residues include His131 and Tyr135. A disordered region spans residues 142 to 162 (EAMGQKHEKLDYSQQKAPDTK). Positions 153-162 (YSQQKAPDTK) are enriched in polar residues.

It belongs to the CcmE/CycJ family.

It is found in the cell inner membrane. Heme chaperone required for the biogenesis of c-type cytochromes. Transiently binds heme delivered by CcmC and transfers the heme to apo-cytochromes in a process facilitated by CcmF and CcmH. The chain is Cytochrome c-type biogenesis protein CcmE from Shewanella baltica (strain OS223).